Here is a 1857-residue protein sequence, read N- to C-terminus: Chitin synthase Y (1857 aa).

Residues 1-22 are disordered; that stretch reads MVGPSPAGTVPSHAQSSLPSLP. A Myosin motor domain is found at 1-788; that stretch reads MVGPSPAGTV…CWADLAKVGE (788 aa). 102–109 is a binding site for ATP; that stretch reads GESGAGKT. The segment at 601-653 is disordered; that stretch reads SSKPLRMPSMARRKASPASRLTFDAPTAEEPEDNESYGGSTAKSSGRRKSAMS. An N-linked (GlcNAc...) asparagine glycan is attached at Asn-634. Residues 668–692 form an actin-binding region; sequence LEIVNKCLSSPSLNPYFIFCLKPND. 2 helical membrane passes run 898–918 and 937–957; these read WMAI…RLFG and LIIW…PGLV. The region spanning 961 to 1020 is the Cytochrome b5 heme-binding domain; the sequence is QHVYSAAELESHNGKNGHDSYIAIRGVVFDLDKFMPRHYPDIVPQSSLKKYAGMDATGLF. 2 N-linked (GlcNAc...) asparagine glycosylation sites follow: Asn-1047 and Asn-1072. Residues 1209-1229 traverse the membrane as a helical segment; that stretch reads FILAISILICAVVIFKFAAAL. Asn-1572 carries an N-linked (GlcNAc...) asparagine glycan. The next 3 helical transmembrane spans lie at 1603-1623, 1630-1650, and 1657-1677; these read LLST…IVWL, IPWT…LIFI, and MIGW…ALPF. In terms of domain architecture, DEK-C spans 1799 to 1854; that stretch reads LPSDDAILAEIREILRTADLMTVTKKSIKQELERRFGVNLDAKRPYINSATEAVLS.

The protein in the N-terminal section; belongs to the TRAFAC class myosin-kinesin ATPase superfamily. Myosin family. It in the C-terminal section; belongs to the chitin synthase family. Class V subfamily.

It is found in the cell membrane. The protein localises to the cell septum. The protein resides in the cell tip. It carries out the reaction [(1-&gt;4)-N-acetyl-beta-D-glucosaminyl](n) + UDP-N-acetyl-alpha-D-glucosamine = [(1-&gt;4)-N-acetyl-beta-D-glucosaminyl](n+1) + UDP + H(+). Polymerizes chitin, a structural polymer of the cell wall and septum, by transferring the sugar moiety of UDP-GlcNAc to the non-reducing end of the growing chitin polymer. Specifically involved in hyphal elongation and new cell wall formation. The sequence is that of Chitin synthase Y from Aspergillus oryzae (strain ATCC 42149 / RIB 40) (Yellow koji mold).